The primary structure comprises 116 residues: Large ribosomal subunit protein bL17 (116 aa).

Belongs to the bacterial ribosomal protein bL17 family. As to quaternary structure, part of the 50S ribosomal subunit. Contacts protein L32.

This is Large ribosomal subunit protein bL17 from Aliarcobacter butzleri (strain RM4018) (Arcobacter butzleri).